The sequence spans 284 residues: Pseudopaline exporter CntI (284 aa).

A run of 10 helical transmembrane segments spans residues Val-2–Val-22, Leu-34–Leu-54, Gly-74–Ala-94, Ala-96–Gly-116, Ala-122–Ser-142, Ser-147–Ile-167, Ile-179–Phe-199, Gly-209–Phe-229, Ile-236–Trp-256, and Val-259–Ser-279. 2 consecutive EamA domains span residues Ser-8–Val-138 and Val-151–Ser-279.

The protein belongs to the EamA transporter family.

Its subcellular location is the cell inner membrane. Transports the metallophore pseudopaline, which is involved in the acquisition of nickel and zinc, and thus enables bacterial growth inside the host, where metal access is limited. Is probably involved in the export of pseudopaline. This Pseudomonas aeruginosa (strain UCBPP-PA14) protein is Pseudopaline exporter CntI.